Here is a 224-residue protein sequence, read N- to C-terminus: Acyl-protein thioesterase 1 (224 aa).

Catalysis depends on charge relay system residues Ser-116, Asp-170, and His-203.

Belongs to the AB hydrolase superfamily. AB hydrolase 2 family.

Its subcellular location is the cytoplasm. The protein resides in the nucleus. It catalyses the reaction S-hexadecanoyl-L-cysteinyl-[protein] + H2O = L-cysteinyl-[protein] + hexadecanoate + H(+). Functionally, hydrolyzes fatty acids from S-acylated cysteine residues in proteins with a strong preference for palmitoylated G-alpha proteins over other acyl substrates. Mediates the deacylation of G-alpha proteins such as GPA1 in vivo, but has weak or no activity toward palmitoylated Ras proteins. Has weak lysophospholipase activity in vitro; however such activity may not exist in vivo. In Schizosaccharomyces pombe (strain 972 / ATCC 24843) (Fission yeast), this protein is Acyl-protein thioesterase 1.